Reading from the N-terminus, the 424-residue chain is UDP-glycosyltransferase 76H1 (424 aa).

UDP-alpha-D-glucose is bound by residues S248, 306 to 307, 324 to 332, and 346 to 349; these read WA, HCGWNSTIE, and FADQ.

It belongs to the UDP-glycosyltransferase family.

May glycosylate diterpenes or flavonols in leaves. The chain is UDP-glycosyltransferase 76H1 from Stevia rebaudiana (Stevia).